Here is a 499-residue protein sequence, read N- to C-terminus: Glycolate oxidase subunit GlcD (499 aa).

Residues 52–230 (YRTRPLLVVL…TEVTVKLLPK (179 aa)) form the FAD-binding PCMH-type domain.

This sequence belongs to the FAD-binding oxidoreductase/transferase type 4 family. In terms of assembly, the glycolate oxidase likely consists of three subunits, GlcD, GlcE and GlcF. FAD serves as cofactor.

Its subcellular location is the cell inner membrane. The enzyme catalyses glycolate + A = glyoxylate + AH2. The catalysed reaction is (R)-lactate + A = pyruvate + AH2. Component of a complex that catalyzes the oxidation of glycolate to glyoxylate. Is required for E.coli to grow on glycolate as a sole source of carbon. Is also able to oxidize D-lactate ((R)-lactate) with a similar rate. Does not link directly to O(2), and 2,6-dichloroindophenol (DCIP) and phenazine methosulfate (PMS) can act as artificial electron acceptors in vitro, but the physiological molecule that functions as a primary electron acceptor during glycolate oxidation is unknown. The polypeptide is Glycolate oxidase subunit GlcD (glcD) (Escherichia coli O6:H1 (strain CFT073 / ATCC 700928 / UPEC)).